The sequence spans 419 residues: MSEDFRPRSDFLQTLLLRGYVHQCSDLEGIDAKAQSGELVAYIGFDCTAPSLHVGSLVQIMMLRWLQKTGGKPIALMGGGTTQVGDPSGKDESRKILSLETIEANKAGIASVFSKFIAFGDGKTQALMVDNAEWLTALKYVDFLRDVGRHFSVNRMMAMDSVKLRLERDQELSFLEFNYMCLQAYDFVELNRRYGCVLQMGGSDQWGNIVTGLDLGRRLGAPQLYALTSPLLTTASGAKMGKTAQGAVWLNEDMLPVFDYWQFWRNCEDRDVGRFLKLFTELPLDETVRLESLGGAEINEAKKILATEATSMAHGREAALLAEEAARQTFEEGALAESLPSIDIDAAEIEAGLGVLAAFVKAGLVASTSEARRQIKGGGLRVNDAPVADERAALQQGDVASGVIKLSLGRKRHVLLKLV.

Residue tyrosine 42 coordinates L-tyrosine. Positions 47 to 56 (CTAPSLHVGS) match the 'HIGH' region motif. Residues tyrosine 179 and glutamine 183 each contribute to the L-tyrosine site. Positions 239 to 243 (KMGKT) match the 'KMSKS' region motif. Lysine 242 is an ATP binding site. In terms of domain architecture, S4 RNA-binding spans 353–419 (LGVLAAFVKA…RKRHVLLKLV (67 aa)).

The protein belongs to the class-I aminoacyl-tRNA synthetase family. TyrS type 1 subfamily. In terms of assembly, homodimer.

Its subcellular location is the cytoplasm. The catalysed reaction is tRNA(Tyr) + L-tyrosine + ATP = L-tyrosyl-tRNA(Tyr) + AMP + diphosphate + H(+). Its function is as follows. Catalyzes the attachment of tyrosine to tRNA(Tyr) in a two-step reaction: tyrosine is first activated by ATP to form Tyr-AMP and then transferred to the acceptor end of tRNA(Tyr). This Methylocella silvestris (strain DSM 15510 / CIP 108128 / LMG 27833 / NCIMB 13906 / BL2) protein is Tyrosine--tRNA ligase.